A 265-amino-acid chain; its full sequence is Cyclin-C (265 aa).

Residues 48–151 (IQVLGEQLKL…LLENLDCCLI (104 aa)) enclose the Cyclin N-terminal domain.

It belongs to the cyclin family. Cyclin C subfamily. Component of the Cdk8 module of the Mediator complex.

It localises to the nucleus. Its function is as follows. Component of the Mediator complex, a coactivator involved in regulated gene transcription of nearly all RNA polymerase II-dependent genes. Mediator functions as a bridge to convey information from gene-specific regulatory proteins to the basal RNA polymerase II transcription machinery. Mediator is recruited to promoters by direct interactions with regulatory proteins and serves as a scaffold for the assembly of a functional preinitiation complex with RNA polymerase II and the general transcription factors. Binds to and activates cyclin-dependent kinase Cdk8 that phosphorylates the CTD (C-terminal domain) of the large subunit of RNA polymerase II (RNAp II), which may inhibit the formation of a transcription initiation complex. This Aedes aegypti (Yellowfever mosquito) protein is Cyclin-C (CycC).